A 303-amino-acid chain; its full sequence is Ornithine carbamoyltransferase (303 aa).

Carbamoyl phosphate contacts are provided by residues serine 52–threonine 55, glutamine 79, arginine 103, and histidine 130–glutamine 133. L-ornithine-binding positions include asparagine 161, aspartate 222, and serine 226 to methionine 227. Residues cysteine 262–leucine 263 and arginine 290 each bind carbamoyl phosphate.

This sequence belongs to the aspartate/ornithine carbamoyltransferase superfamily. OTCase family.

The protein localises to the cytoplasm. The catalysed reaction is carbamoyl phosphate + L-ornithine = L-citrulline + phosphate + H(+). The protein operates within amino-acid biosynthesis; L-arginine biosynthesis; L-arginine from L-ornithine and carbamoyl phosphate: step 1/3. Functionally, reversibly catalyzes the transfer of the carbamoyl group from carbamoyl phosphate (CP) to the N(epsilon) atom of ornithine (ORN) to produce L-citrulline. The polypeptide is Ornithine carbamoyltransferase (Geobacter metallireducens (strain ATCC 53774 / DSM 7210 / GS-15)).